The sequence spans 313 residues: Pyrimidine-specific ribonucleoside hydrolase RihB (313 aa).

The Proton acceptor role is filled by aspartate 11. Positions 11, 16, and 124 each coordinate Ca(2+). Positions 227 and 239 each coordinate substrate. Ca(2+) is bound at residue aspartate 240.

The protein belongs to the IUNH family. RihB subfamily. In terms of assembly, homotetramer. The cofactor is Ca(2+).

It carries out the reaction a pyrimidine ribonucleoside + H2O = a pyrimidine nucleobase + D-ribose. In terms of biological role, hydrolyzes cytidine or uridine to ribose and cytosine or uracil, respectively. Has a clear preference for cytidine over uridine. Strictly specific for ribonucleosides. The polypeptide is Pyrimidine-specific ribonucleoside hydrolase RihB (Escherichia coli O9:H4 (strain HS)).